The chain runs to 122 residues: Biogenesis of lysosome-related organelles complex 1 subunit CNL1 (122 aa).

Residues Met1–Glu10 show a composition bias toward basic and acidic residues. Positions Met1–Ile21 are disordered. Residues Glu63 to Ile95 are a coiled coil.

Belongs to the BLOC1S4 family. As to quaternary structure, component of the biogenesis of lysosome-related organelles complex-1 (BLOC-1) composed of at least BLI1, BLS1, CNL1, KXD1, SNN1 and VAB2.

Its subcellular location is the cytoplasm. In terms of biological role, component of the biogenesis of lysosome-related organelles complex-1 (BLOC-1), a complex that is involved in endosomal cargo sorting. The sequence is that of Biogenesis of lysosome-related organelles complex 1 subunit CNL1 (CLN1) from Saccharomyces cerevisiae (strain RM11-1a) (Baker's yeast).